Consider the following 421-residue polypeptide: 3-isopropylmalate dehydratase large subunit (421 aa).

The [4Fe-4S] cluster site is built by Cys-300, Cys-360, and Cys-363.

It belongs to the aconitase/IPM isomerase family. LeuC type 2 subfamily. In terms of assembly, heterodimer of LeuC and LeuD. The cofactor is [4Fe-4S] cluster.

It carries out the reaction (2R,3S)-3-isopropylmalate = (2S)-2-isopropylmalate. The protein operates within amino-acid biosynthesis; L-leucine biosynthesis; L-leucine from 3-methyl-2-oxobutanoate: step 2/4. In terms of biological role, catalyzes the isomerization between 2-isopropylmalate and 3-isopropylmalate, via the formation of 2-isopropylmaleate. This is 3-isopropylmalate dehydratase large subunit from Lachnoclostridium phytofermentans (strain ATCC 700394 / DSM 18823 / ISDg) (Clostridium phytofermentans).